Consider the following 464-residue polypeptide: NADH dehydrogenase [ubiquinone] flavoprotein 1, mitochondrial (464 aa).

A mitochondrion-targeting transit peptide spans 1–20; the sequence is MLATRRLLGWSLPARVSVRF. Residue lysine 81 is modified to N6-acetyllysine; alternate. The residue at position 81 (lysine 81) is an N6-succinyllysine; alternate. 87–96 contacts NADH; sequence GRGGAGFPTG. Lysine 104 carries the N6-acetyllysine modification. FMN is bound at residue 199 to 247; that stretch reads RGAGAYICGEETALIESIEGKQGKPRLKPPFPADVGVFGCPTTVANVET. Arginine 257 is subject to Omega-N-methylarginine. Lysine 375 carries the N6-acetyllysine modification. [4Fe-4S] cluster contacts are provided by cysteine 379, cysteine 382, cysteine 385, and cysteine 425.

This sequence belongs to the complex I 51 kDa subunit family. In terms of assembly, core subunit of respiratory chain NADH dehydrogenase (Complex I) which is composed of 45 different subunits. This is a component of the flavoprotein-sulfur (FP) fragment of the enzyme. Interacts with RAB5IF. FMN is required as a cofactor. The cofactor is [4Fe-4S] cluster.

The protein localises to the mitochondrion inner membrane. The catalysed reaction is a ubiquinone + NADH + 5 H(+)(in) = a ubiquinol + NAD(+) + 4 H(+)(out). Its function is as follows. Core subunit of the mitochondrial membrane respiratory chain NADH dehydrogenase (Complex I) which catalyzes electron transfer from NADH through the respiratory chain, using ubiquinone as an electron acceptor. Part of the peripheral arm of the enzyme, where the electrons from NADH are accepted by flavin mononucleotide (FMN) and then passed along a chain of iron-sulfur clusters by electron tunnelling to the final acceptor ubiquinone. Contains FMN, which is the initial electron acceptor as well as one iron-sulfur cluster. This Pan troglodytes (Chimpanzee) protein is NADH dehydrogenase [ubiquinone] flavoprotein 1, mitochondrial.